A 181-amino-acid polypeptide reads, in one-letter code: MMRLKEKYNQSIKPALVKEFDIKNPMLIPVIEKVVISVGAGELAKDQKVLQNVADTISLIAGQKAVITKAKKSVAGFKVREGFPIGVMVTLRKENMYAFLDKLISIALPRVKDFRGLSRDGFDGRGNYNFGLDEQLMFPEVEYDKILRTHGMNISIVTTAQNDKQAQKLLELIGVPFTKGK.

The protein belongs to the universal ribosomal protein uL5 family. In terms of assembly, part of the 50S ribosomal subunit; part of the 5S rRNA/L5/L18/L25 subcomplex. Contacts the 5S rRNA and the P site tRNA. Forms a bridge to the 30S subunit in the 70S ribosome.

In terms of biological role, this is one of the proteins that bind and probably mediate the attachment of the 5S RNA into the large ribosomal subunit, where it forms part of the central protuberance. In the 70S ribosome it contacts protein S13 of the 30S subunit (bridge B1b), connecting the 2 subunits; this bridge is implicated in subunit movement. Contacts the P site tRNA; the 5S rRNA and some of its associated proteins might help stabilize positioning of ribosome-bound tRNAs. This is Large ribosomal subunit protein uL5 from Campylobacter jejuni subsp. doylei (strain ATCC BAA-1458 / RM4099 / 269.97).